We begin with the raw amino-acid sequence, 268 residues long: MGHYIKTEEHVTLFVEDIGHGRPIIFLHGWPLNHKMFEYQMNELPKRGFRFIGVDLRGYGQSDRPWEGYDYDTMADDVKAVIYTLQLENAILAGFSMGGAIAIRYMARHEGADVDKLILLSAAAPAFTKRPGYPYGMRKQDIDDMIELFKADRPKTLADLGKQFFEKKVSPELRQWFLNLMLEASSYGTIHSGIALRDEDLRKELAAIKVPTLILHGRKDRIAPFDFAKELKRGIKQSELVPFANSGHGAFYEEKEKINSLIAQFSNS.

Residues 23–254 form the AB hydrolase-1 domain; sequence PIIFLHGWPL…NSGHGAFYEE (232 aa). Catalysis depends on residues Ser96, Asp220, and His248.

The protein belongs to the AB hydrolase superfamily.

The sequence is that of AB hydrolase superfamily protein YisY (yisY) from Bacillus subtilis (strain 168).